The primary structure comprises 290 residues: UPF0761 membrane protein ASA_4118 (290 aa).

6 helical membrane passes run 48 to 68 (LLSLVPMIAVVFGMMSAFPVF), 104 to 124 (NTTAVGIGALIVVALMLISAI), 144 to 164 (FAMYWMILTLGPVLIGGSIAI), 182 to 202 (IGYLLLRSLPFLFSVLTFLLV), 216 to 236 (AFIGALVAATLFELAKRGFAI), and 250 to 270 (ALATIPVLFVWVYLSWLVVLL).

Belongs to the UPF0761 family.

It is found in the cell inner membrane. This Aeromonas salmonicida (strain A449) protein is UPF0761 membrane protein ASA_4118.